The chain runs to 284 residues: Diaminopimelate epimerase (284 aa).

Positions 20, 53, and 73 each coordinate substrate. Cysteine 82 functions as the Proton donor in the catalytic mechanism. Substrate-binding positions include 83-84 (GN), asparagine 167, asparagine 200, and 218-219 (ER). The active-site Proton acceptor is the cysteine 227. A substrate-binding site is contributed by 228-229 (GS).

The protein belongs to the diaminopimelate epimerase family. Homodimer.

It localises to the cytoplasm. The enzyme catalyses (2S,6S)-2,6-diaminopimelate = meso-2,6-diaminopimelate. Its pathway is amino-acid biosynthesis; L-lysine biosynthesis via DAP pathway; DL-2,6-diaminopimelate from LL-2,6-diaminopimelate: step 1/1. Its function is as follows. Catalyzes the stereoinversion of LL-2,6-diaminopimelate (L,L-DAP) to meso-diaminopimelate (meso-DAP), a precursor of L-lysine and an essential component of the bacterial peptidoglycan. The chain is Diaminopimelate epimerase from Xanthomonas oryzae pv. oryzae (strain MAFF 311018).